The primary structure comprises 336 residues: O-methyltransferase 2 (336 aa).

S-adenosyl-L-methionine is bound by residues Gly-170, Asp-198, Asn-221, Phe-222, and Lys-237. His-241 functions as the Proton acceptor in the catalytic mechanism.

The protein belongs to the class I-like SAM-binding methyltransferase superfamily. Cation-independent O-methyltransferase family. COMT subfamily.

The enzyme catalyses (3,5-dichloro-2,4,6-trihydroxyphenyl)hexan-1-one + S-adenosyl-L-methionine = 1-(3,5-dichloro-2,6-dihydroxy-4-methoxyphenyl)hexan-1-one + S-adenosyl-L-homocysteine + H(+). The polypeptide is O-methyltransferase 2 (omt2) (Dictyostelium discoideum (Social amoeba)).